The chain runs to 1463 residues: Alpha-agarase (1463 aa).

Positions 1-27 are cleaved as a signal peptide; sequence MITSSKKIVSAMLSTSLWIGVASAAYA. A propeptide spanning residues 28–684 is cleaved from the precursor; sequence ETTNVEAEGY…PSTLSESIFT (657 aa). Disordered stretches follow at residues 166 to 191 and 512 to 549; these read VTPE…PGTP and TDDI…PQPG. Residues 518–536 show a composition bias toward polar residues; the sequence is CANTPSGETANATGCSSSQ. One can recognise a PA14 domain in the interval 534 to 677; the sequence is SSQEGGGTDP…GGTNFVHPST (144 aa). Residues 701–832 form the CBM6 domain; that stretch reads IIVELESFVF…QWSGDRVRFT (132 aa).

The protein belongs to the glycosyl hydrolase 96 family. As to quaternary structure, monomer. Ca(2+) is required as a cofactor.

It catalyses the reaction Endohydrolysis of 1,3-alpha-L-galactosidic linkages in agarose, yielding agarotetraose as the major product.. Functionally, alpha-agarase. Hydrolyzes agarose, agarohexaose, neoagarohexaose and porphyran. Hydrolysis of porphyran by this enzyme improves its antioxidant activity. Does not hydrolyze kappa-carrageenan, iota-carrageenen or lambda-carrageenan. The protein is Alpha-agarase of Thalassotalea agarivorans (Thalassomonas agarivorans).